The chain runs to 454 residues: Guanine deaminase (454 aa).

Zn(2+)-binding residues include H82 and H84. Substrate contacts are provided by residues 84–87 (HAPQ), 213–214 (RF), 240–243 (HISE), and D330. Zn(2+) contacts are provided by H240 and D330. Phosphoserine is present on S453.

Belongs to the metallo-dependent hydrolases superfamily. ATZ/TRZ family. Homodimer. It depends on Zn(2+) as a cofactor.

It catalyses the reaction guanine + H2O + H(+) = xanthine + NH4(+). It participates in purine metabolism; guanine degradation; xanthine from guanine: step 1/1. Its function is as follows. Catalyzes the hydrolytic deamination of guanine, producing xanthine and ammonia. This chain is Guanine deaminase (Gda), found in Rattus norvegicus (Rat).